The primary structure comprises 286 residues: ATP synthase gamma chain (286 aa).

This sequence belongs to the ATPase gamma chain family. In terms of assembly, F-type ATPases have 2 components, CF(1) - the catalytic core - and CF(0) - the membrane proton channel. CF(1) has five subunits: alpha(3), beta(3), gamma(1), delta(1), epsilon(1). CF(0) has three main subunits: a, b and c.

The protein resides in the cell inner membrane. Functionally, produces ATP from ADP in the presence of a proton gradient across the membrane. The gamma chain is believed to be important in regulating ATPase activity and the flow of protons through the CF(0) complex. The sequence is that of ATP synthase gamma chain from Solibacter usitatus (strain Ellin6076).